The following is a 180-amino-acid chain: uncharacterized protein (180 aa).

Residues 35–163 form the Nudix hydrolase domain; it reads LRHRATYIVV…TPDSLKALAL (129 aa). The Nudix box signature appears at 72–94; the sequence is GGVVQADEQLLESARREAEEELG. Residues Glu88 and Glu92 each coordinate Mg(2+).

This sequence belongs to the Nudix hydrolase family. Requires Mg(2+) as cofactor.

This is an uncharacterized protein from Escherichia coli O157:H7.